The sequence spans 616 residues: MAKLRSATSTQGRNMAGARALWRATGVKDSDFGKPIVAIANSFTQFVPGHVHLKDMGSLVAGAIEEAGGIAKEFNTIAVDDGIAMGHGGMLYSLPSRELIADSVEYMVNAHCADALVCISNCDKITPGMLMAALRLNIPVVFVSGGPMEAGKTKLSDKLIKLDLVDAMVAAADDRVSDEDSEKIERSACPTCGSCSGMFTANSMNCLTEALGLSLPGNGSLLATHSDRRELFLEAGRRVMALANRYYRDDDESALPRNIASFKAFENAMALDIAMGGSSNTVLHLLAAAQEAKVDFTMADIDRLSRQVPHLCKVAPSTPKYHMEDVHRAGGVMGILGELDRAGLLHTDVSHVAGENLKAVLVQYDLVQTQDEAVQQFYAAGPAGIPTTKAFSQSCRWPSLDVDRQEGCIRTREFAFSQEGGLAVLSGNIAADGCIVKTAGVDEANHTFVGHARVYESQDDAVAGILGGEVVAGDVVVIRYEGPKGGPGMQEMLYPTSYLKSKGLGTSCALITDGRFSGGTSGLSIGHVSPEAAAGGTIALVETGDRIEIDIPARSITLAVSDEVLETRRQAMQARGKQAWKPVNRERSVSLALKAYAMLATSADKGAVRDVSKLED.

Asp81 contributes to the Mg(2+) binding site. Residue Cys122 participates in [2Fe-2S] cluster binding. Asp123 and Lys124 together coordinate Mg(2+). Lys124 is modified (N6-carboxylysine). A [2Fe-2S] cluster-binding site is contributed by Cys195. Glu491 is a binding site for Mg(2+). Residue Ser517 is the Proton acceptor of the active site.

Belongs to the IlvD/Edd family. As to quaternary structure, homodimer. It depends on [2Fe-2S] cluster as a cofactor. Requires Mg(2+) as cofactor.

The enzyme catalyses (2R)-2,3-dihydroxy-3-methylbutanoate = 3-methyl-2-oxobutanoate + H2O. It catalyses the reaction (2R,3R)-2,3-dihydroxy-3-methylpentanoate = (S)-3-methyl-2-oxopentanoate + H2O. The protein operates within amino-acid biosynthesis; L-isoleucine biosynthesis; L-isoleucine from 2-oxobutanoate: step 3/4. It functions in the pathway amino-acid biosynthesis; L-valine biosynthesis; L-valine from pyruvate: step 3/4. Functionally, functions in the biosynthesis of branched-chain amino acids. Catalyzes the dehydration of (2R,3R)-2,3-dihydroxy-3-methylpentanoate (2,3-dihydroxy-3-methylvalerate) into 2-oxo-3-methylpentanoate (2-oxo-3-methylvalerate) and of (2R)-2,3-dihydroxy-3-methylbutanoate (2,3-dihydroxyisovalerate) into 2-oxo-3-methylbutanoate (2-oxoisovalerate), the penultimate precursor to L-isoleucine and L-valine, respectively. This chain is Dihydroxy-acid dehydratase, found in Shewanella loihica (strain ATCC BAA-1088 / PV-4).